The following is a 277-amino-acid chain: Co-chaperone protein DjlA (277 aa).

At 1-6 (MRYWGK) the chain is on the periplasmic side. A helical transmembrane segment spans residues 7–31 (LLGLVLGVMYAPGVVGALLGLLVGH). The Cytoplasmic portion of the chain corresponds to 32–277 (MVDRALGAKR…DLIKREKGFK (246 aa)). In terms of domain architecture, J spans 211–277 (DACKVLGVNS…DLIKREKGFK (67 aa)).

As to quaternary structure, homodimer.

The protein resides in the cell inner membrane. Regulatory DnaK co-chaperone. Direct interaction between DnaK and DjlA is needed for the induction of the wcaABCDE operon, involved in the synthesis of a colanic acid polysaccharide capsule, possibly through activation of the RcsB/RcsC phosphotransfer signaling pathway. The colanic acid capsule may help the bacterium survive conditions outside the host. The sequence is that of Co-chaperone protein DjlA from Yersinia pseudotuberculosis serotype I (strain IP32953).